A 484-amino-acid chain; its full sequence is Glutamate--tRNA ligase (484 aa).

The short motif at 11–21 (PSPTGLLHIGN) is the 'HIGH' region element. Residues 255 to 259 (KLSKR) carry the 'KMSKS' region motif. An ATP-binding site is contributed by Lys-258.

This sequence belongs to the class-I aminoacyl-tRNA synthetase family. Glutamate--tRNA ligase type 1 subfamily. In terms of assembly, monomer.

It is found in the cytoplasm. The catalysed reaction is tRNA(Glu) + L-glutamate + ATP = L-glutamyl-tRNA(Glu) + AMP + diphosphate. Catalyzes the attachment of glutamate to tRNA(Glu) in a two-step reaction: glutamate is first activated by ATP to form Glu-AMP and then transferred to the acceptor end of tRNA(Glu). The sequence is that of Glutamate--tRNA ligase from Streptococcus agalactiae serotype Ia (strain ATCC 27591 / A909 / CDC SS700).